A 147-amino-acid chain; its full sequence is MVNLTSDEKTAVLALWNKVDVEDCGGEALGRLLVVYPWTQRFFESFGDLSTPAAVFANAKVKAHGKKVLTSFGEGMNHLDNLKGTFAKLSELHCDKLHVDPENFKLLGNMLVVVLARHFGKEFDWHMHACFQKVVAGVANALAHKYH.

Val-2 bears the N-acetylvaline mark. A Globin domain is found at 3–147 (NLTSDEKTAV…VANALAHKYH (145 aa)). Ser-45 is subject to Phosphoserine. Residue Lys-60 is modified to N6-acetyllysine. Heme b is bound at residue His-64. At Lys-83 the chain carries N6-acetyllysine. His-93 is a binding site for heme b. At Cys-94 the chain carries S-nitrosocysteine. The residue at position 145 (Lys-145) is an N6-acetyllysine.

It belongs to the globin family. In terms of assembly, heterotetramer of two alpha chains and two beta chains. In terms of tissue distribution, red blood cells.

In terms of biological role, involved in oxygen transport from the lung to the various peripheral tissues. The protein is Hemoglobin subunit beta (HBB) of Dasypus novemcinctus (Nine-banded armadillo).